The primary structure comprises 288 residues: Glutamate racemase (288 aa).

The tract at residues 1–21 (MAIARQDVNISSPEATTSDAQ) is disordered. A compositionally biased stretch (polar residues) spans 8–21 (VNISSPEATTSDAQ). Substrate-binding positions include 32-33 (DS) and 64-65 (YG). Catalysis depends on Cys96, which acts as the Proton donor/acceptor. 97 to 98 (NT) is a substrate binding site. The Proton donor/acceptor role is filled by Cys209. 210–211 (TH) contacts substrate.

This sequence belongs to the aspartate/glutamate racemases family.

It carries out the reaction L-glutamate = D-glutamate. It participates in cell wall biogenesis; peptidoglycan biosynthesis. In terms of biological role, provides the (R)-glutamate required for cell wall biosynthesis. The sequence is that of Glutamate racemase from Proteus mirabilis (strain HI4320).